A 514-amino-acid polypeptide reads, in one-letter code: MHAQVQTQEHSASGSLRFNGIGKTFPGVKALDGISFVAHPGQVHALMGENGAGKSTLLKILGGAYIPSSGELQIGEQTMAFKSTADSIGSGVAVIHQELHLVPEMTVAENLFLGHLPASFGLINRGALRQQALACLKGLADEIDPQTKVGRLSLGQRQLVEIAKALSRGAHVIAFDEPTSSLSAREIDRLMAIIGRLRDEGKVVLYVSHRMEEVFRICDAVTVFKDGRYVRTFDDMSQLTHDQLVTCMVGRDIQDIYDYRGRPRGAVALRVDGLLGPGLREPISFDAHKGEILGLFGLVGAGRTELFRLLSGLERNTAGRLELRGHELKLRSPRDAIAAGILLCPEDRKKEGIIPLASVAENINISARGAHSGLGCLLRGIWEKGNAEKQIKALKVKTPHAGQQIKFLSGGNQQKAILGRWLSMPMKVLLLDEPTRGIDIGAKAEIYQIIHNLAADGISVIVVSSDLMEVMGISDRILVLCEGALRGEVSRDQANESNLLQLALPRHRADGVAN.

2 ABC transporter domains span residues 16–251 and 251–507; these read LRFN…MVGR and RDIQ…LPRH. Residue 48-55 coordinates ATP; the sequence is GENGAGKS.

The protein belongs to the ABC transporter superfamily. Arabinose importer (TC 3.A.1.2.2) family. As to quaternary structure, the complex is composed of two ATP-binding proteins (AraG), two transmembrane proteins (AraH) and a solute-binding protein (AraF).

The protein resides in the cell inner membrane. It carries out the reaction L-arabinose(out) + ATP + H2O = L-arabinose(in) + ADP + phosphate + H(+). In terms of biological role, part of the ABC transporter complex AraFGH involved in arabinose import. Responsible for energy coupling to the transport system. This chain is Arabinose import ATP-binding protein AraG, found in Pseudomonas fluorescens (strain Pf0-1).